Consider the following 1346-residue polypeptide: Pikromycin polyketide synthase component PikAIV (1346 aa).

The stretch at 3–32 (SSNEQLVDALRASLKENEELRKESRRRADR) forms a coiled coil. The region spanning 34-461 (QEPMAIVGMS…GTNAHVVLEE (428 aa)) is the Ketosynthase family 3 (KS3) domain. Residues 37–1332 (MAIVGMSCRF…HAPAVAEAVL (1296 aa)) form a module 6 region. Active-site for beta-ketoacyl synthase activity residues include cysteine 207, histidine 342, and histidine 382. The interval 562 to 844 (FVFPGQGTQW…VLTMTLPDKV (283 aa)) is acyltransferase. Serine 652 acts as the Acyl-ester intermediate; for acyltransferase activity in catalysis. The region spanning 945-1020 (SAVLAMVMRQ…ALAERISDEL (76 aa)) is the Carrier domain. Serine 980 carries the post-translational modification O-(pantetheine 4'-phosphoryl)serine. The tract at residues 1028-1050 (AEPSDHEQAEEEKAAAPAGARSG) is disordered. The span at 1030–1041 (PSDHEQAEEEKA) shows a compositional bias: basic and acidic residues. Threonine 1125 lines the substrate pocket. Positions 1127–1332 (ANGGPHEFLR…HAPAVAEAVL (206 aa)) are thioesterase. The active-site Nucleophile; for thioesterase activity is the serine 1196. Substrate-binding residues include glycine 1197 and aspartate 1224. Catalysis depends on histidine 1316, which acts as the Proton acceptor; for thioesterase activity.

As to quaternary structure, homodimer. Pikromycin PKS consists of a combination of multimodular (PikAI and PikAII) and monomodular (PikAIII and PikAIV) polypeptides each coding for a functional synthase subunit which participates in 1 (monomodular) or 2 (multimodular) of the six FAS-like elongation steps required for formation of the polyketide. Module 1, 2, 3, 4, 5, and 6 participating in biosynthesis steps 1, 2, 3, 4, 5, and 6, respectively. Requires pantetheine 4'-phosphate as cofactor.

It carries out the reaction 5 (S)-methylmalonyl-CoA + malonyl-CoA + 5 NADPH + 11 H(+) = 10-deoxymethynolide + 6 CO2 + 5 NADP(+) + 6 CoA + 2 H2O. It catalyses the reaction 6 (S)-methylmalonyl-CoA + malonyl-CoA + 5 NADPH + 12 H(+) = narbonolide + 7 CO2 + 5 NADP(+) + 7 CoA + 2 H2O. Its pathway is antibiotic biosynthesis. Its activity is regulated as follows. Irreversibly inhibited by (2S,3R,4S)-2,4-dihydroxy-3-methylhexyl-phosphonic acid and (3R,4S)-4-hydroxy-3-methyl-2-oxohexyl-phosphonic acid. In terms of biological role, involved in the biosynthesis of 12- and 14-membered ring macrolactone antibiotics such as methymycin and neomethymycin, and pikromycin and narbomycin, respectively. Component of the pikromycin PKS which catalyzes the biosynthesis of both precursors 10-deoxymethynolide (12-membered ring macrolactone) and narbonolide (14-membered ring macrolactone). Chain elongation through PikAI, PikAII and PikAIII followed by thioesterase catalyzed termination results in the production of 10-deoxymethynolide, while continued elongation through PikAIV, followed by thioesterase (TE) catalyzed cyclization results in the biosynthesis of the narbonolide. The thioesterase can use a series of diketide-N-acetylcysteamine (SNAC) thioesters, but has a strong preference for the 2-methyl-3-ketopentanoyl-SNAC over the stereoisomers of 2-methyl-3-hydroxyacyl-SNAC. This chain is Pikromycin polyketide synthase component PikAIV, found in Streptomyces venezuelae.